A 273-amino-acid polypeptide reads, in one-letter code: MTDSTIRIAIVGAGGRMGRQLIQAVTQMEGVVLGAAIERKGSTLVGSDAGELAGVGLLNVIVGDDLSQLTDNFDVLIDFTRPEGTLEHLAICRQHRKAMVIGTTGFDEAGKAAISEAAADIGIVFAANFSVGVNVVLKLLEKAAKVMGDYTDIEIIEAHHRHKVDAPSGTALAMGEAIADAMGRSLKDCAVYSREGYTGERKPGTIGFATVRAGDIVGEHTAMFADIGERVEITHKATSRMTFAHGAVKSAIWLGKHDNGLFDMRDVLNLNEL.

Residues 12-17 (GAGGRM) and glutamate 38 contribute to the NAD(+) site. Position 39 (arginine 39) interacts with NADP(+). Residues 102–104 (GTT) and 126–129 (AANF) contribute to the NAD(+) site. Histidine 159 serves as the catalytic Proton donor/acceptor. Residue histidine 160 coordinates (S)-2,3,4,5-tetrahydrodipicolinate. The active-site Proton donor is lysine 163. (S)-2,3,4,5-tetrahydrodipicolinate is bound at residue 169 to 170 (GT).

This sequence belongs to the DapB family. As to quaternary structure, homotetramer.

Its subcellular location is the cytoplasm. The catalysed reaction is (S)-2,3,4,5-tetrahydrodipicolinate + NAD(+) + H2O = (2S,4S)-4-hydroxy-2,3,4,5-tetrahydrodipicolinate + NADH + H(+). The enzyme catalyses (S)-2,3,4,5-tetrahydrodipicolinate + NADP(+) + H2O = (2S,4S)-4-hydroxy-2,3,4,5-tetrahydrodipicolinate + NADPH + H(+). Its pathway is amino-acid biosynthesis; L-lysine biosynthesis via DAP pathway; (S)-tetrahydrodipicolinate from L-aspartate: step 4/4. Its function is as follows. Catalyzes the conversion of 4-hydroxy-tetrahydrodipicolinate (HTPA) to tetrahydrodipicolinate. In Yersinia pestis bv. Antiqua (strain Antiqua), this protein is 4-hydroxy-tetrahydrodipicolinate reductase.